Here is a 98-residue protein sequence, read N- to C-terminus: NADH-ubiquinone oxidoreductase chain 4L (98 aa).

3 consecutive transmembrane segments (helical) span residues 1 to 21 (MPST…GLLL), 29 to 49 (SLLC…LMAL), and 61 to 81 (IVLM…LVMV).

The protein belongs to the complex I subunit 4L family. In terms of assembly, core subunit of respiratory chain NADH dehydrogenase (Complex I) which is composed of 45 different subunits.

It is found in the mitochondrion inner membrane. It catalyses the reaction a ubiquinone + NADH + 5 H(+)(in) = a ubiquinol + NAD(+) + 4 H(+)(out). In terms of biological role, core subunit of the mitochondrial membrane respiratory chain NADH dehydrogenase (Complex I) which catalyzes electron transfer from NADH through the respiratory chain, using ubiquinone as an electron acceptor. Part of the enzyme membrane arm which is embedded in the lipid bilayer and involved in proton translocation. This is NADH-ubiquinone oxidoreductase chain 4L (MT-ND4L) from Choloepus didactylus (Southern two-toed sloth).